The following is a 258-amino-acid chain: NAD-capped RNA hydrolase NudC (258 aa).

A substrate-binding site is contributed by Arg-69. Cys-98 and Cys-101 together coordinate Zn(2+). Glu-111 serves as a coordination point for substrate. Positions 116 and 119 each coordinate Zn(2+). Tyr-124 contributes to the substrate binding site. Residues 125-248 (PQIAPCIIVA…TVARRLIEDT (124 aa)) enclose the Nudix hydrolase domain. A divalent metal cation-binding residues include Ala-158, Glu-174, and Glu-178. Positions 159–180 (GFVEVGETLEQTVAREVMEESG) match the Nudix box motif. 192-199 (QPWPFPMS) contacts substrate. Residue Glu-219 participates in a divalent metal cation binding. Residue Ala-241 participates in substrate binding.

The protein belongs to the Nudix hydrolase family. NudC subfamily. As to quaternary structure, homodimer. Mg(2+) serves as cofactor. Requires Mn(2+) as cofactor. The cofactor is Zn(2+).

The enzyme catalyses a 5'-end NAD(+)-phospho-ribonucleoside in mRNA + H2O = a 5'-end phospho-adenosine-phospho-ribonucleoside in mRNA + beta-nicotinamide D-ribonucleotide + 2 H(+). The catalysed reaction is NAD(+) + H2O = beta-nicotinamide D-ribonucleotide + AMP + 2 H(+). It carries out the reaction NADH + H2O = reduced beta-nicotinamide D-ribonucleotide + AMP + 2 H(+). In terms of biological role, mRNA decapping enzyme that specifically removes the nicotinamide adenine dinucleotide (NAD) cap from a subset of mRNAs by hydrolyzing the diphosphate linkage to produce nicotinamide mononucleotide (NMN) and 5' monophosphate mRNA. The NAD-cap is present at the 5'-end of some mRNAs and stabilizes RNA against 5'-processing. Has preference for mRNAs with a 5'-end purine. Catalyzes the hydrolysis of a broad range of dinucleotide pyrophosphates. The polypeptide is NAD-capped RNA hydrolase NudC (Enterobacter sp. (strain 638)).